A 425-amino-acid polypeptide reads, in one-letter code: Protein UL117 (425 aa).

Residues 59-83 are disordered; sequence PTTTSSSLAPPRDDERRPTPPLRPP.

Belongs to the herpesviridae U84 family.

Its subcellular location is the host nucleus. Its function is as follows. Plays a role in the inhibition of host DNA replication in the infected cell. Targets the mini-chromosome maintenance (MCM) complex and blocks the accumulation of MCM proteins and their loading onto host chromatin. The protein is Protein UL117 (UL117) of Homo sapiens (Human).